A 736-amino-acid chain; its full sequence is ABC transporter G family member 16 (736 aa).

The region spanning 88-332 (LDFHDLVPWR…FAGFGNPIPE (245 aa)) is the ABC transporter domain. 125–132 (GASGSGKS) contributes to the ATP binding site. Transmembrane regions (helical) follow at residues 410-430 (SVINHGGGTLAVPAFANPFWI), 449-469 (LLGMRLATVIVTGFILATVFW), 484-504 (FFAFAMSTMFYTCADALPVFL), 525-545 (VLSHAIVTFPSLIFLSLAFAV), 569-589 (ASFWSGSSFVTFLSGVVPHVM), 590-610 (LGYTIVVAILAYFLLFSGFFI), and 709-729 (LLITVGFGFLFRILFYLCLLL). An ABC transmembrane type-2 domain is found at 430–640 (IEIKTLTRRS…PYEAVLQNEF (211 aa)).

This sequence belongs to the ABC transporter superfamily. ABCG family. Eye pigment precursor importer (TC 3.A.1.204) subfamily.

It localises to the membrane. The sequence is that of ABC transporter G family member 16 (ABCG16) from Arabidopsis thaliana (Mouse-ear cress).